The sequence spans 369 residues: Mitogen-activated protein kinase 4 (369 aa).

The Protein kinase domain occupies 32-319; sequence YVPIKPIGRG…VTEALEHPYM (288 aa). Residues 38 to 46 and Lys-61 each bind ATP; that span reads IGRGAYGIV. Asp-158 (proton acceptor) is an active-site residue. Thr-191 is subject to Phosphothreonine. The TXY motif lies at 191–193; it reads TEY. The residue at position 193 (Tyr-193) is a Phosphotyrosine.

This sequence belongs to the protein kinase superfamily. CMGC Ser/Thr protein kinase family. MAP kinase subfamily. Dually phosphorylated on Thr-191 and Tyr-193, which activates the enzyme. In terms of tissue distribution, expressed in leaves and panicles.

The enzyme catalyses L-seryl-[protein] + ATP = O-phospho-L-seryl-[protein] + ADP + H(+). The catalysed reaction is L-threonyl-[protein] + ATP = O-phospho-L-threonyl-[protein] + ADP + H(+). With respect to regulation, activated by threonine and tyrosine phosphorylation. The protein is Mitogen-activated protein kinase 4 (MPK4) of Oryza sativa subsp. japonica (Rice).